Consider the following 196-residue polypeptide: MLSHLRPAIVSAGLFTVLLGLAYPLAVTGVAQAAFPAQANGSLVKDAKGTVVGSTLIAQAFAKPEYLHPRPSAAGAGYDASASSGSNMGPLNDTLIKREKTDADALRAENPGVVIPADAVTTSGSGLDPEISPANARFQAPRVAKARGLRLAQVQAVIDGQAQGPLLGFIGQPRVNVLTVNRTLDARFPAHGQKGG.

The helical transmembrane segment at 7-27 threads the bilayer; it reads PAIVSAGLFTVLLGLAYPLAV.

The protein belongs to the KdpC family. The system is composed of three essential subunits: KdpA, KdpB and KdpC.

It localises to the cell inner membrane. Its function is as follows. Part of the high-affinity ATP-driven potassium transport (or Kdp) system, which catalyzes the hydrolysis of ATP coupled with the electrogenic transport of potassium into the cytoplasm. This subunit acts as a catalytic chaperone that increases the ATP-binding affinity of the ATP-hydrolyzing subunit KdpB by the formation of a transient KdpB/KdpC/ATP ternary complex. This is Potassium-transporting ATPase KdpC subunit from Caulobacter sp. (strain K31).